A 508-amino-acid polypeptide reads, in one-letter code: Putative POTE ankyrin domain family member M (508 aa).

5 ANK repeats span residues 172–201 (QKRTALHLASANGNSEVVKLLLDRRCQLNI), 205–234 (KKRTALTKAVQCQEDECALMLLEHGTDPNI), 238–267 (YGNTALHYAIYNEDKLMAKALLLYGADIES), 271–300 (HGLTPLLLGVHEQKQQVVKFLIKKKANLNA), and 304–333 (YGRTVLILAVCCGSASIVSLLLEQNIDVSS). The segment at 369-487 (SSENSNPEQD…KQLSEEQNTG (119 aa)) is disordered. Basic and acidic residues-rich tracts occupy residues 377–392 (QDLKLTSEEESQRLKG) and 406–421 (EINKGGDRKVEEEMKK). Residues 476–487 (TQKQLSEEQNTG) show a composition bias toward polar residues.

Belongs to the POTE family.

This is Putative POTE ankyrin domain family member M (POTEM) from Homo sapiens (Human).